A 235-amino-acid polypeptide reads, in one-letter code: Protein GrpE (235 aa).

Residues 1–18 (MTDGNQKPDGNSGEQVTV) show a composition bias toward polar residues. Disordered stretches follow at residues 1–50 (MTDG…DAAH) and 198–235 (ESVD…PSGS). Residues 19–35 (TDKRRIDPETGEVRHVP) show a composition bias toward basic and acidic residues. Over residues 215-235 (ADQGNSADTSGEQAESEPSGS) the composition is skewed to polar residues.

Belongs to the GrpE family. As to quaternary structure, homodimer.

It is found in the cytoplasm. Its function is as follows. Participates actively in the response to hyperosmotic and heat shock by preventing the aggregation of stress-denatured proteins, in association with DnaK and GrpE. It is the nucleotide exchange factor for DnaK and may function as a thermosensor. Unfolded proteins bind initially to DnaJ; upon interaction with the DnaJ-bound protein, DnaK hydrolyzes its bound ATP, resulting in the formation of a stable complex. GrpE releases ADP from DnaK; ATP binding to DnaK triggers the release of the substrate protein, thus completing the reaction cycle. Several rounds of ATP-dependent interactions between DnaJ, DnaK and GrpE are required for fully efficient folding. The protein is Protein GrpE of Mycobacterium tuberculosis (strain ATCC 25177 / H37Ra).